The sequence spans 278 residues: HTH-type transcriptional activator RhaS (278 aa).

In terms of domain architecture, HTH araC/xylS-type spans Asn174 to Gly272. 2 consecutive DNA-binding regions (H-T-H motif) follow at residues Glu191 to Thr212 and Val239 to Phe262.

As to quaternary structure, binds DNA as a dimer.

It localises to the cytoplasm. Activates expression of the rhaBAD and rhaT operons. The chain is HTH-type transcriptional activator RhaS from Salmonella heidelberg (strain SL476).